The primary structure comprises 157 residues: Small ribosomal subunit protein uS7 (157 aa).

Belongs to the universal ribosomal protein uS7 family. As to quaternary structure, part of the 30S ribosomal subunit. Contacts proteins S9 and S11.

Its function is as follows. One of the primary rRNA binding proteins, it binds directly to 16S rRNA where it nucleates assembly of the head domain of the 30S subunit. Is located at the subunit interface close to the decoding center, probably blocks exit of the E-site tRNA. The protein is Small ribosomal subunit protein uS7 of Bdellovibrio bacteriovorus (strain ATCC 15356 / DSM 50701 / NCIMB 9529 / HD100).